The chain runs to 128 residues: Small ribosomal subunit protein uS9c (128 aa).

The protein belongs to the universal ribosomal protein uS9 family.

It is found in the plastid. This is Small ribosomal subunit protein uS9c (rps9) from Euglena longa (Euglenophycean alga).